Consider the following 522-residue polypeptide: Glucose-6-phosphate 1-dehydrogenase (522 aa).

NADP(+) contacts are provided by residues 40 to 47, R74, and K177; that span reads GASGDLAK. D-glucose 6-phosphate contacts are provided by residues K177, 207–211, E245, and D264; that span reads HYLGK. The Proton acceptor role is filled by H269. R364 provides a ligand contact to NADP(+). The D-glucose 6-phosphate site is built by K367 and K372. 3 residues coordinate NADP(+): K373, R377, and R401. Q403 contributes to the D-glucose 6-phosphate binding site. NADP(+) is bound by residues 409–411, 429–431, R495, and W517; these read YMK and DLT.

The protein belongs to the glucose-6-phosphate dehydrogenase family.

It localises to the cytoplasm. The protein resides in the cytosol. The catalysed reaction is D-glucose 6-phosphate + NADP(+) = 6-phospho-D-glucono-1,5-lactone + NADPH + H(+). Its pathway is carbohydrate degradation; pentose phosphate pathway; D-ribulose 5-phosphate from D-glucose 6-phosphate (oxidative stage): step 1/3. Cytosolic glucose-6-phosphate dehydrogenase that catalyzes the first and rate-limiting step of the oxidative branch within the pentose phosphate pathway/shunt, an alternative route to glycolysis for the dissimilation of carbohydrates and a major source of reducing power and metabolic intermediates for fatty acid and nucleic acid biosynthetic processes. This chain is Glucose-6-phosphate 1-dehydrogenase (gspd-1), found in Caenorhabditis elegans.